The chain runs to 151 residues: NADPH-dependent 7-cyano-7-deazaguanine reductase (151 aa).

Cys49 functions as the Thioimide intermediate in the catalytic mechanism. The active-site Proton donor is Asp56. Substrate is bound by residues Ile71–Ser73 and His90–Glu91.

This sequence belongs to the GTP cyclohydrolase I family. QueF type 1 subfamily.

The protein resides in the cytoplasm. It catalyses the reaction 7-aminomethyl-7-carbaguanine + 2 NADP(+) = 7-cyano-7-deazaguanine + 2 NADPH + 3 H(+). The protein operates within tRNA modification; tRNA-queuosine biosynthesis. Catalyzes the NADPH-dependent reduction of 7-cyano-7-deazaguanine (preQ0) to 7-aminomethyl-7-deazaguanine (preQ1). The chain is NADPH-dependent 7-cyano-7-deazaguanine reductase from Caulobacter vibrioides (strain ATCC 19089 / CIP 103742 / CB 15) (Caulobacter crescentus).